We begin with the raw amino-acid sequence, 525 residues long: Probable feruloyl esterase B-1 (525 aa).

The N-terminal stretch at 1-20 is a signal peptide; that stretch reads MMRWFLLIGLASAAATDSSA. 6 cysteine pairs are disulfide-bonded: Cys26–Cys75, Cys61–Cys114, Cys187–Cys442, Cys256–Cys273, Cys282–Cys292, and Cys502–Cys524. Residues Asn51, Asn80, and Asn98 are each glycosylated (N-linked (GlcNAc...) asparagine). The active-site Acyl-ester intermediate is the Ser188. Ca(2+) contacts are provided by Asp257, Asp260, Ala262, and Asp264. N-linked (GlcNAc...) asparagine glycosylation is found at Asn283, Asn288, and Asn351. Catalysis depends on charge relay system residues Asp401 and His441.

The protein belongs to the tannase family.

It localises to the secreted. It carries out the reaction feruloyl-polysaccharide + H2O = ferulate + polysaccharide.. In terms of biological role, involved in degradation of plant cell walls. Hydrolyzes the feruloyl-arabinose ester bond in arabinoxylans as well as the feruloyl-galactose and feruloyl-arabinose ester bonds in pectin. The chain is Probable feruloyl esterase B-1 (faeB-1) from Neosartorya fischeri (strain ATCC 1020 / DSM 3700 / CBS 544.65 / FGSC A1164 / JCM 1740 / NRRL 181 / WB 181) (Aspergillus fischerianus).